The sequence spans 199 residues: V-set and transmembrane domain-containing protein 5 (199 aa).

The N-terminal stretch at 1–27 (MRPPRCVGRTQGIPLGLLAFWVATARC) is a signal peptide. Residues 28-146 (LQSQGVSLYI…VSEIRYEDLH (119 aa)) are Extracellular-facing. One can recognise an Ig-like C2-type domain in the interval 36 to 138 (YIPRSAINAT…QSGTILLHVS (103 aa)). N-linked (GlcNAc...) asparagine glycans are attached at residues N43, N87, and N101. Residues 147 to 167 (FVAVFFALLAAVAVVLISLMW) form a helical membrane-spanning segment. At 168–199 (VCNQCAYKFQRKRRYKLRESTTEEIEMKDVEC) the chain is on the cytoplasmic side. An important for CDC42-dependent filopodia induction region spans residues 169–185 (CNQCAYKFQRKRRYKLR).

Can homooligomerize through cis interactions within the same cell membrane. Post-translationally, N-glycosylated.

It localises to the cell membrane. Its subcellular location is the cell projection. It is found in the dendrite. The protein localises to the axon. In terms of biological role, cell adhesion-like membrane protein of the central nervous system (CNS) which modulates both the position and complexity of central neurons by altering their membrane morphology and dynamics. Involved in the formation of neuronal dendrites and protrusions including dendritic filopodia. In synaptogenesis, regulates synapse formation by altering dendritic spine morphology and actin distribution. Promotes formation of unstable neuronal spines such as thin and branched types. Regulates neuronal morphogenesis and migration during cortical development in the brain. The chain is V-set and transmembrane domain-containing protein 5 (Vstm5) from Rattus norvegicus (Rat).